A 541-amino-acid polypeptide reads, in one-letter code: Putative asparagine synthetase [glutamine-hydrolyzing] 1 (541 aa).

Cysteine 2 (for GATase activity) is an active-site residue. Residues 2–213 (CSISGIIVKD…PNSQLIYYLD (212 aa)) form the Glutamine amidotransferase type-2 domain. Residues 68-72 (RLAIV), 92-94 (NGE), and aspartate 116 each bind L-glutamine. Residues valine 289 and 363–364 (SG) contribute to the ATP site.

The protein belongs to the asparagine synthetase family.

The enzyme catalyses L-aspartate + L-glutamine + ATP + H2O = L-asparagine + L-glutamate + AMP + diphosphate + H(+). It participates in amino-acid biosynthesis; L-asparagine biosynthesis; L-asparagine from L-aspartate (L-Gln route): step 1/1. This Methanocaldococcus jannaschii (strain ATCC 43067 / DSM 2661 / JAL-1 / JCM 10045 / NBRC 100440) (Methanococcus jannaschii) protein is Putative asparagine synthetase [glutamine-hydrolyzing] 1.